The following is a 292-amino-acid chain: 4-hydroxy-tetrahydrodipicolinate synthase (292 aa).

T45 provides a ligand contact to pyruvate. The Proton donor/acceptor role is filled by Y133. K161 (schiff-base intermediate with substrate) is an active-site residue. Position 203 (I203) interacts with pyruvate.

Belongs to the DapA family. As to quaternary structure, homotetramer; dimer of dimers.

The protein resides in the cytoplasm. It carries out the reaction L-aspartate 4-semialdehyde + pyruvate = (2S,4S)-4-hydroxy-2,3,4,5-tetrahydrodipicolinate + H2O + H(+). The protein operates within amino-acid biosynthesis; L-lysine biosynthesis via DAP pathway; (S)-tetrahydrodipicolinate from L-aspartate: step 3/4. Its function is as follows. Catalyzes the condensation of (S)-aspartate-beta-semialdehyde [(S)-ASA] and pyruvate to 4-hydroxy-tetrahydrodipicolinate (HTPA). In Nitrosomonas eutropha (strain DSM 101675 / C91 / Nm57), this protein is 4-hydroxy-tetrahydrodipicolinate synthase.